A 469-amino-acid polypeptide reads, in one-letter code: Probable acetate kinase (469 aa).

Asn-30 is a binding site for Mg(2+). Lys-37 contributes to the ATP binding site. Arg-122 provides a ligand contact to substrate. Catalysis depends on Asp-179, which acts as the Proton donor/acceptor. 239 to 243 serves as a coordination point for ATP; sequence HLGSG. Glu-453 provides a ligand contact to Mg(2+).

The protein belongs to the acetokinase family. The cofactor is Mg(2+).

It carries out the reaction acetate + ATP = acetyl phosphate + ADP. The protein operates within metabolic intermediate biosynthesis; acetyl-CoA biosynthesis; acetyl-CoA from acetate: step 1/2. In Neurospora crassa (strain ATCC 24698 / 74-OR23-1A / CBS 708.71 / DSM 1257 / FGSC 987), this protein is Probable acetate kinase.